Reading from the N-terminus, the 77-residue chain is Liver-expressed antimicrobial peptide 2 (77 aa).

An N-terminal signal peptide occupies residues 1–22; it reads MWHLKLFAVLVICLLLAVQVHG. A propeptide spanning residues 23–37 is cleaved from the precursor; it reads SPIPELSSAKRRPRR. 2 disulfides stabilise this stretch: C54–C65 and C60–C70.

The protein belongs to the LEAP2 family.

It localises to the secreted. In terms of biological role, has an antimicrobial activity. The sequence is that of Liver-expressed antimicrobial peptide 2 (LEAP2) from Sus scrofa (Pig).